The chain runs to 230 residues: Cytidylate kinase (230 aa).

Gly-12–Thr-20 contributes to the ATP binding site.

This sequence belongs to the cytidylate kinase family. Type 1 subfamily.

It is found in the cytoplasm. It carries out the reaction CMP + ATP = CDP + ADP. The enzyme catalyses dCMP + ATP = dCDP + ADP. This chain is Cytidylate kinase, found in Yersinia enterocolitica serotype O:8 / biotype 1B (strain NCTC 13174 / 8081).